The chain runs to 308 residues: Beta-1,3-galactosyltransferase 5 (308 aa).

The Cytoplasmic segment spans residues 1-7 (MAHMKTR). A helical; Signal-anchor for type II membrane protein membrane pass occupies residues 8–25 (LVYASILMMGALCLYFSM). The Lumenal portion of the chain corresponds to 26 to 308 (DSFRELPFVF…NSKEQDCPAV (283 aa)). Residues Asn128, Asn172, and Asn229 are each glycosylated (N-linked (GlcNAc...) asparagine).

Belongs to the glycosyltransferase 31 family. As to expression, expressed in brain and kidney.

It localises to the golgi apparatus membrane. The catalysed reaction is a globoside Gb4Cer (d18:1(4E)) + UDP-alpha-D-galactose = a globoside GalGb4Cer (d18:1(4E)) + UDP + H(+). Its pathway is protein modification; protein glycosylation. Catalyzes the transfer of Gal to GlcNAc-based acceptors with a preference for the core3 O-linked glycan GlcNAc(beta1,3)GalNAc structure. Can use glycolipid LC3Cer as an efficient acceptor. Also catalyzes the transfer of Gal to the terminal GalNAc unit of the globoside GB4, thereby synthesizing the glycolipid GB5, also known as the stage-specific embryonic antigen-3 (SSEA-3). The protein is Beta-1,3-galactosyltransferase 5 of Mus musculus (Mouse).